The following is a 1325-amino-acid chain: Nonribosomal peptide synthetase (1325 aa).

The segment at Tyr248 to Gln644 is adenylation. In terms of domain architecture, Carrier spans Glu779–Ser856. O-(pantetheine 4'-phosphoryl)serine is present on Ser816. Residues Glu893 to Leu1310 form a condensation region.

This sequence belongs to the NRP synthetase family. Pantetheine 4'-phosphate is required as a cofactor.

It functions in the pathway antifungal biosynthesis. Its function is as follows. Nonribosomal peptide synthetase; part of the gene cluster that mediates the biosynthesis of the tetrahydropyranyl antifungal agent lanomycin that acts as an inhibitor of CYP51 and blocks the ergosterol biosynthesis. The biosynthesis probably begins with the formation of an hexaketide, followed by methionine mediated alkylation of C-2 and C-6, and methylation of the reduced C-3 oxygen, pyran forming reductive ring closure, oxygenation of C-4, beta-keto reduction, enoyl reduction and dehydration of the remaining oxygens, and finally, acylation with glycine to complete the biosynthesis. This chain is Nonribosomal peptide synthetase, found in Pyrenophora dematioidea (Helminthosporium dematioideum).